The following is a 340-amino-acid chain: Putative D-lactate dehydrogenase (340 aa).

Residues 153 to 154 (NI), D174, 206 to 207 (TP), 233 to 235 (VSR), and D259 each bind NAD(+). Residue R235 is part of the active site. E264 is an active-site residue. H296 serves as the catalytic Proton donor.

The protein belongs to the D-isomer specific 2-hydroxyacid dehydrogenase family.

The catalysed reaction is (R)-lactate + NAD(+) = pyruvate + NADH + H(+). This Dictyostelium discoideum (Social amoeba) protein is Putative D-lactate dehydrogenase (ldhA).